Consider the following 426-residue polypeptide: Histidine--tRNA ligase (426 aa).

It belongs to the class-II aminoacyl-tRNA synthetase family. Homodimer.

The protein resides in the cytoplasm. The enzyme catalyses tRNA(His) + L-histidine + ATP = L-histidyl-tRNA(His) + AMP + diphosphate + H(+). In Streptococcus pyogenes serotype M49 (strain NZ131), this protein is Histidine--tRNA ligase.